Consider the following 227-residue polypeptide: Large ribosomal subunit protein uL3 (227 aa).

The tract at residues 129 to 154 is disordered; that stretch reads GMQPVSHGQSDRTRSRGSSGAQGPQK.

It belongs to the universal ribosomal protein uL3 family. Part of the 50S ribosomal subunit. Forms a cluster with proteins L14 and L19.

Functionally, one of the primary rRNA binding proteins, it binds directly near the 3'-end of the 23S rRNA, where it nucleates assembly of the 50S subunit. The sequence is that of Large ribosomal subunit protein uL3 from Endomicrobium trichonymphae.